Here is a 113-residue protein sequence, read N- to C-terminus: Protein translation factor SUI1 homolog (113 aa).

Positions 1-24 are disordered; sequence MSELDSQVPTAFDPFADANAEDSG. N-acetylserine is present on serine 2.

This sequence belongs to the SUI1 family.

Functionally, probably involved in translation. In Brassica oleracea (Wild cabbage), this protein is Protein translation factor SUI1 homolog.